Here is a 237-residue protein sequence, read N- to C-terminus: Survival of motor neuron-related-splicing factor 30 (237 aa).

Over residues 52–69 the composition is skewed to polar residues; the sequence is SQPAEGTTSTKSSETVAP. Disordered stretches follow at residues 52-73 and 149-198; these read SQPAEGTTSTKSSETVAPSHSW and REYK…RSIF. In terms of domain architecture, Tudor spans 72–132; that stretch reads SWRVGDHCMA…KKVEEGRIRD (61 aa). Positions 142 to 160 match the Nuclear localization signal motif; sequence KELQAEQREYKKKKAQKKV. The segment covering 151-161 has biased composition (basic residues); sequence YKKKKAQKKVQ. A compositionally biased stretch (basic and acidic residues) spans 162–175; the sequence is RMKELEQEREDQKS. A compositionally biased stretch (polar residues) spans 176–185; it reads KWQQFNNKAY.

This sequence belongs to the SMN family. In terms of assembly, associates with spliceosomes.

It localises to the nucleus speckle. It is found in the nucleus. Its subcellular location is the cajal body. Its function is as follows. Involved in spliceosome assembly. This is Survival of motor neuron-related-splicing factor 30 (smndc1) from Danio rerio (Zebrafish).